We begin with the raw amino-acid sequence, 388 residues long: Succinyl-diaminopimelate desuccinylase (388 aa).

His75 serves as a coordination point for Zn(2+). Residue Asp77 is part of the active site. Asp108 provides a ligand contact to Zn(2+). Glu142 serves as the catalytic Proton acceptor. Residues Glu143, Glu171, and His361 each contribute to the Zn(2+) site.

Belongs to the peptidase M20A family. DapE subfamily. Homodimer. Requires Zn(2+) as cofactor. Co(2+) serves as cofactor.

It carries out the reaction N-succinyl-(2S,6S)-2,6-diaminopimelate + H2O = (2S,6S)-2,6-diaminopimelate + succinate. Its pathway is amino-acid biosynthesis; L-lysine biosynthesis via DAP pathway; LL-2,6-diaminopimelate from (S)-tetrahydrodipicolinate (succinylase route): step 3/3. In terms of biological role, catalyzes the hydrolysis of N-succinyl-L,L-diaminopimelic acid (SDAP), forming succinate and LL-2,6-diaminopimelate (DAP), an intermediate involved in the bacterial biosynthesis of lysine and meso-diaminopimelic acid, an essential component of bacterial cell walls. The protein is Succinyl-diaminopimelate desuccinylase of Methylocella silvestris (strain DSM 15510 / CIP 108128 / LMG 27833 / NCIMB 13906 / BL2).